We begin with the raw amino-acid sequence, 1093 residues long: MANMEVSFTHLGNHLVSDSAAAIKAGGSDELSNIDPDENLLYGVYGGRGPRGNGRRRHDDDDNETEVLDDDDDESLASVPVDGMKSLKLDAPVEEKELPPHACAYCGIHSPSSVVKCLTCNKWFCSAKGSAFSSHIVNHLVRARHKEVQLHPESSLGDTVLECYNCGTKNVFILGFIPAKSDTVVVLLCRQPCGASTSTKDMSWDISRWQPLIEDRAFLNWLVTPPTDAEQLRARHLTPPMIAKLEEMWKEAPNATVADLEKTAGVDDDPHPVLLKYDDPYHYQNIFGPLVKMESDYDKKLKEAQSEDGLQVRWHLGLNSKHVASFILPKIESGDVKLAVGDEMRLKYKGELRPPWEGVGYVIKIPNNQSDEVEVELRKSANDKSVPTECTHNFSADYVWKATSYDRMQLAMKTFAVDEMSVSGYIFHKLLGHEVQVAPTKITMPKKFHVPGLPELNASQIAAIKQVLSNPLSLIQGPPGTGKTVTSATIIYHLAKMSNSQVLVCAPSNVAVDQLCERIHRTGLKVVRLTAKSREDVESSVSFLALHEQVRMNTTNKELDGLVKLKTETGELSSQDEKRFKQLTRQAEREILQNADVVCCTCVGAGDPRLSKMKFRNVLIDESTQSAEPECMIPLVLGCKQVVLVGDHKQLGPVIMNKKAAKAGLNQSLFERLVKLQFTPIRLKVQYRMHPCLSEFPSNMFYEGSLQNGVTAAERLRKDVDFPWPVPETPMMFWSNLGNEEISASGTSYLNRTEAANVEKIVTRFFKAGVKPADIGVITPYEGQRSYIVNTMQNTGTFKKESYREVEVASVDAFQGREKDFIVLSCVRSNENQGIGFLSDPRRLNVALTRAKYGLVIIGNPKVLCKHELWHHLLVHFKDKKCLVEGPLTNLQPSLLQFGRPRQAYRPQRSHTQHVASGPSNGRFAAPLTAGSVRDYETGSMVSYIPDDVSSIHSSALGGAALSSGYPAMFSNFHPEAWAGLPCAGPNGRPGAKGRGRATESIAGESVANSEFTDATSSVIGGKGIGQGGASLGAGLSEAIGSARPTSYSQSDRLKQYVESNGRMGVGNGYRRYDDDEKSVSTAFASQIGTGFD.

A disordered region spans residues 42–79 (YGVYGGRGPRGNGRRRHDDDDNETEVLDDDDDESLASV). Residues 61 to 75 (DDNETEVLDDDDDES) show a composition bias toward acidic residues. Positions 95-252 (EKELPPHACA…AKLEEMWKEA (158 aa)) constitute a Upf1 CH-rich domain. Zn(2+)-binding residues include C103, C106, C117, C120, C125, H135, H139, H145, C163, C166, C189, and C193. The C3H stretch occupies residues 103 to 135 (CAYCGIHSPSSVVKCLTCNKWFCSAKGSAFSSH). The interval 117 to 145 (CLTCNKWFCSAKGSAFSSHIVNHLVRARH) is CC/SHH/C. Residues 163 to 193 (CYNCGTKNVFILGFIPAKSDTVVVLLCRQPC) form a C4 region. Residues Q460, 480 to 484 (GTGKT), Q650, Y687, and E818 contribute to the ATP site.

The protein belongs to the DNA2/NAM7 helicase family.

The protein localises to the cytoplasm. It catalyses the reaction ATP + H2O = ADP + phosphate + H(+). Functionally, RNA-dependent helicase required for nonsense-mediated decay (NMD) of aberrant mRNAs containing premature stop codons and modulates the expression level of normal mRNAs. Also capable of unwinding double-stranded DNA and translocating on single-stranded DNA. The chain is Regulator of nonsense transcripts 1 homolog from Neurospora crassa (strain ATCC 24698 / 74-OR23-1A / CBS 708.71 / DSM 1257 / FGSC 987).